We begin with the raw amino-acid sequence, 204 residues long: MSTQTLRVGIGGPVGSGKTALVARLCQELRERFNIAVVTNDIYTEEDAQFLIRHQALTEDRIIGVETGGCPHTAIREDASMNLAAIDTLTARHPGLDLVLVESGGDNLSATFSPELSDLTLYVIDVSAGDKIPRKGGPGITKSDLLIINKTDLAPIVGASLEVMDRDARKMRGDKPFIFSNMKTGEGLQDIIRFIIDQGMLQAA.

A GTP-binding site is contributed by 12 to 19; that stretch reads GPVGSGKT.

It belongs to the SIMIBI class G3E GTPase family. UreG subfamily. Homodimer. UreD, UreF and UreG form a complex that acts as a GTP-hydrolysis-dependent molecular chaperone, activating the urease apoprotein by helping to assemble the nickel containing metallocenter of UreC. The UreE protein probably delivers the nickel.

The protein localises to the cytoplasm. Functionally, facilitates the functional incorporation of the urease nickel metallocenter. This process requires GTP hydrolysis, probably effectuated by UreG. The polypeptide is Urease accessory protein UreG (Hahella chejuensis (strain KCTC 2396)).